A 476-amino-acid chain; its full sequence is WD repeat, SAM and U-box domain-containing protein 1 (476 aa).

7 WD repeats span residues 10–47 (DHSD…ELPY), 52–91 (GHTY…MLAV), 95–134 (PTGS…FYRS), 137–176 (VKDG…LCNE), 178–227 (AHDL…FLGG), 237–276 (GHSA…ILHT), and 279–318 (QHTR…PCAG). The 64-residue stretch at 333-396 (WSEDDVSAWL…LQKIEELRMK (64 aa)) folds into the SAM domain. Residues 403 to 476 (AVPDEFLCPI…ISRWLETQQK (74 aa)) enclose the U-box domain.

This is WD repeat, SAM and U-box domain-containing protein 1 (WDSUB1) from Gallus gallus (Chicken).